The following is a 468-amino-acid chain: Ribosomal protein uS12 methylthiotransferase RimO (468 aa).

The region spanning 18 to 129 is the MTTase N-terminal domain; that stretch reads PTVAFAHLGC…IVEVLERVEA (112 aa). Residues Cys27, Cys63, Cys92, Cys167, Cys171, and Cys174 each coordinate [4Fe-4S] cluster. Residues 153 to 382 form the Radical SAM core domain; it reads TTGEAVAYLK…MTLQQPISAA (230 aa). Residues 385 to 456 enclose the TRAM domain; that stretch reads ARWVGRTVDA…IYDLRAEIVG (72 aa).

It belongs to the methylthiotransferase family. RimO subfamily. [4Fe-4S] cluster serves as cofactor.

The protein resides in the cytoplasm. It carries out the reaction L-aspartate(89)-[ribosomal protein uS12]-hydrogen + (sulfur carrier)-SH + AH2 + 2 S-adenosyl-L-methionine = 3-methylsulfanyl-L-aspartate(89)-[ribosomal protein uS12]-hydrogen + (sulfur carrier)-H + 5'-deoxyadenosine + L-methionine + A + S-adenosyl-L-homocysteine + 2 H(+). In terms of biological role, catalyzes the methylthiolation of an aspartic acid residue of ribosomal protein uS12. In Synechococcus sp. (strain WH7803), this protein is Ribosomal protein uS12 methylthiotransferase RimO.